The primary structure comprises 449 residues: 23S rRNA (uracil(1939)-C(5))-methyltransferase RlmD (449 aa).

A TRAM domain is found at Ser12–Lys70. 4 residues coordinate [4Fe-4S] cluster: Cys83, Cys89, Cys92, and Cys170. Residues Gln282, Phe311, Asn316, Glu332, Asp359, and Asp379 each contribute to the S-adenosyl-L-methionine site. Cys405 acts as the Nucleophile in catalysis.

The protein belongs to the class I-like SAM-binding methyltransferase superfamily. RNA M5U methyltransferase family. RlmD subfamily.

The catalysed reaction is uridine(1939) in 23S rRNA + S-adenosyl-L-methionine = 5-methyluridine(1939) in 23S rRNA + S-adenosyl-L-homocysteine + H(+). Its function is as follows. Catalyzes the formation of 5-methyl-uridine at position 1939 (m5U1939) in 23S rRNA. The protein is 23S rRNA (uracil(1939)-C(5))-methyltransferase RlmD of Shewanella sp. (strain MR-4).